The sequence spans 490 residues: Actin-related protein 6 (490 aa).

The protein belongs to the actin family. ARP6 subfamily.

It is found in the cytoplasm. The protein resides in the cytoskeleton. The chain is Actin-related protein 6 from Dictyostelium discoideum (Social amoeba).